A 2696-amino-acid polypeptide reads, in one-letter code: Histone-lysine N-methyltransferase, H3 lysine-36 specific (2696 aa).

A Phosphoserine modification is found at Ser-117. Disordered regions lie at residues Met-207 to Ala-252 and Asp-281 to Gln-311. Over residues Gln-236–Asn-248 the composition is skewed to basic and acidic residues. Composition is skewed to polar residues over residues Asp-281–Gly-290 and Gly-297–Glu-306. One can recognise a PWWP 1 domain in the interval Val-323 to Gly-388. 2 positions are modified to phosphoserine: Ser-483 and Ser-486. Residues Ala-487 to Gly-514 form a disordered region. A Phosphoserine modification is found at Ser-766. The tract at residues Leu-872 to Ser-891 is disordered. Residue Lys-906 forms a Glycyl lysine isopeptide (Lys-Gly) (interchain with G-Cter in SUMO2) linkage. Disordered stretches follow at residues Tyr-936–Ser-1035, Val-1067–Ile-1093, Ser-1112–Gly-1134, Ser-1243–Lys-1272, Pro-1294–Val-1344, Ser-1382–Asp-1428, and Lys-1480–Glu-1534. The span at Ser-948–Ser-961 shows a compositional bias: low complexity. The segment covering Gly-971–Gly-982 has biased composition (polar residues). 3 stretches are compositionally biased toward basic and acidic residues: residues Ser-1000–Thr-1017, Gly-1070–Pro-1090, and Ser-1112–Glu-1124. The span at Lys-1300–Glu-1314 shows a compositional bias: basic and acidic residues. The segment covering Ser-1323–Ser-1337 has biased composition (polar residues). Lys-1339 is covalently cross-linked (Glycyl lysine isopeptide (Lys-Gly) (interchain with G-Cter in SUMO2)). Ser-1510 is subject to Phosphoserine. Over residues Glu-1513–Pro-1523 the composition is skewed to basic and acidic residues. 3 PHD-type zinc fingers span residues Glu-1543–Gly-1589, Ile-1590–Ala-1646, and Val-1707–Gly-1751. Positions Tyr-1756–Gly-1818 constitute a PWWP 2 domain. The region spanning Ser-1890–Gln-1940 is the AWS domain. One can recognise an SET domain in the interval Pro-1942 to Asn-2059. S-adenosyl-L-methionine is bound by residues Arg-1952–Trp-1954, Thr-1994–Tyr-1997, Asn-2020–His-2021, Asn-2065, and Lys-2071. An inhibits enzyme activity in the absence of bound histone region spans residues Leu-2060–Gly-2066. The Post-SET domain occupies Gly-2066–Gly-2082. Residues Ala-2091–Gly-2111 are disordered. A compositionally biased stretch (basic residues) spans Lys-2097–Arg-2108. The segment at Glu-2118–Asp-2165 adopts a PHD-type 4; atypical zinc-finger fold. A disordered region spans residues Leu-2213–Glu-2422. Over residues Val-2222–Pro-2232 the composition is skewed to pro residues. The span at Arg-2281–Asp-2298 shows a compositional bias: basic and acidic residues. Positions Gly-2303–Arg-2314 are enriched in polar residues. Residues Ser-2330–Gln-2348 show a composition bias toward low complexity. Ser-2369 carries the post-translational modification Phosphoserine. Polar residues-rich tracts occupy residues Arg-2371–Pro-2381 and Ile-2394–Asp-2404. Thr-2462 carries the post-translational modification Phosphothreonine. Disordered regions lie at residues Arg-2464–His-2499, Thr-2553–Gly-2575, Lys-2595–Lys-2616, and Leu-2665–Lys-2696. Ser-2471 is modified (phosphoserine). A Glycyl lysine isopeptide (Lys-Gly) (interchain with G-Cter in SUMO2) cross-link involves residue Lys-2616. Polar residues predominate over residues Glu-2674 to Ser-2686.

Belongs to the class V-like SAM-binding methyltransferase superfamily. In terms of assembly, interacts with the ligand-binding domains of RARA and THRA in the absence of ligand; in the presence of ligand the interaction is severely disrupted but some binding still occurs. Interacts with the ligand-binding domains of RXRA and ESRRA only in the presence of ligand. Interacts with ZNF496. Interacts with AR DNA- and ligand-binding domains. In terms of tissue distribution, expressed in the fetal/adult brain, kidney, skeletal muscle, spleen, and the thymus, and faintly in the lung.

Its subcellular location is the nucleus. The protein resides in the chromosome. The catalysed reaction is L-lysyl(36)-[histone H3] + 2 S-adenosyl-L-methionine = N(6),N(6)-dimethyl-L-lysyl(36)-[histone H3] + 2 S-adenosyl-L-homocysteine + 2 H(+). Histone methyltransferase that dimethylates Lys-36 of histone H3 (H3K36me2). Transcriptional intermediary factor capable of both negatively or positively influencing transcription, depending on the cellular context. The polypeptide is Histone-lysine N-methyltransferase, H3 lysine-36 specific (NSD1) (Homo sapiens (Human)).